An 89-amino-acid polypeptide reads, in one-letter code: Dynein light chain 1, cytoplasmic (89 aa).

The protein belongs to the dynein light chain family. As to quaternary structure, interacts with mett-10; the interaction is direct, and is required for the nuclear localization of mett-10. Component of a dynein-regulating complex composed of at least bicd-1, dlc-1 and egal-1. Interacts with egal-1 and unc-83. Interacts with fbf-2. In terms of tissue distribution, broadly expressed in tissues including the intestine, body wall muscles, germs cells, oocytes, the rectal valve and cells in the head.

It is found in the cytoplasm. The protein localises to the cytoskeleton. Its subcellular location is the nucleus envelope. The protein resides in the cytoplasmic granule. In terms of biological role, acts as a non-catalytic accessory component of a dynein complex. Part of a complex with bicd-1 and egal-1, which is recruited to the nuclear envelope by unc-83, where in turn, it recruits dynein to the nuclear surface and regulates nuclear migrations in hypodermal precursor cells. Probably within a dynein motor complex, plays a role in the cell fate specification of the germline and oogenesis. In particular, it inhibits germ cell proliferation. Regulates the function and localization of the RNA-binding protein fbf-2 in the germline. Plays a role in mitotic and meiotic processes. Involved in the pairing of homologous chromosomes. Independently of its dynein-mediated functions, plays a role in germ cell apoptosis. The sequence is that of Dynein light chain 1, cytoplasmic from Caenorhabditis elegans.